The following is a 99-amino-acid chain: Secreted RxLR effector protein 94 (99 aa).

The RxLR-dEER signature appears at 35-55 (RQLRQSANPSKAWHQWKSETR).

The protein belongs to the RxLR effector family.

The protein localises to the secreted. The protein resides in the host nucleus. It is found in the host cytoplasm. In terms of biological role, secreted effector that completely suppresses the host cell death induced by cell death-inducing proteins. In Plasmopara viticola (Downy mildew of grapevine), this protein is Secreted RxLR effector protein 94.